The sequence spans 699 residues: Envelope glycoprotein G (699 aa).

An N-terminal signal peptide occupies residues 1-22 (MHAIAPRLLLLFVLSGLPGTRG). The Virion surface portion of the chain corresponds to 23-650 (GSGVPGPINP…WFLTASPALD (628 aa)). Residues asparagine 104 and asparagine 163 are each glycosylated (N-linked (GlcNAc...) asparagine; by host). Disordered regions lie at residues 302–390 (PGAL…TTPP) and 403–632 (TPEE…PSGP). The segment covering 323–336 (LRTDPEGVDPDVRA) has biased composition (basic and acidic residues). A compositionally biased stretch (polar residues) spans 348 to 359 (EDTSSDSPTSAP). Low complexity-rich tracts occupy residues 376 to 390 (DPSA…TTPP) and 403 to 447 (TPEE…AKTP). Residue asparagine 437 is glycosylated (N-linked (GlcNAc...) asparagine; by host). Composition is skewed to pro residues over residues 448–459 (PTTPAPTTPPPT) and 467–482 (PTTP…PATP). Low complexity predominate over residues 483–531 (GPVGASAAPTADSPLTASPPATAPGPSAANVSVAATTATPGTRGTARTP). Asparagine 512 is a glycosylation site (N-linked (GlcNAc...) asparagine; by host). Positions 544–554 (DAPPGSPAPPP) are enriched in pro residues. A compositionally biased stretch (acidic residues) spans 562 to 578 (EEFEGAGDGEPPEDDDS). Residues 589–605 (PNKPPPARPGPIRPTLP) are compositionally biased toward pro residues. The helical transmembrane segment at 651–671 (ILFIISTTIHTAAFVCLVALA) threads the bilayer. The Intravirion segment spans residues 672-699 (AQLWRGRAGRRRYAHPSVRYVCLPPERD).

Belongs to the alphaherpesvirinae glycoprotein G family.

It is found in the virion membrane. In terms of biological role, chemokine-binding protein that inhibits neutrophils' chemotaxis. This Human herpesvirus 2 (strain HG52) (HHV-2) protein is Envelope glycoprotein G (gG).